The chain runs to 556 residues: MKPEDLSALLSAVLTDAVDAGDLPAALREGITPARVKVERPRSREHGDWATNVALQLGKKAGMAPRDLAGLVAERLTGKPGIAAVDVAGPGFLNVTLDAASAGALAREIVEAGPEYGRNDTLAGHTVNMEFVSANPTGPLHIGHTRWAALGDAIARLLRASGADVTAEYYVNDAGNQMNVFADSVLARLHGRDVPAGGYPGAYVQELADAVALEHPDVRELTDEAARPVVREAAYRLQMQDIKDTLAAFDVHFDVFTSEQTLHDSGAIDQAVQRLREQGHIEDREGAVWLKTTDFGDDKDRVLIRANGEPTYFAADAAYYLHKRDRGFEEKVYLLGADHHGYVNRLKAIAAAAGDDPATNIEILIGQLISVNGAKLSKRAGNIIELKDLVEWLGRDALRYDLARYPADSPLTIDPELLRSATNDNPVYYVQYAHARASGAARTAQAHGVDRSEFDAALLTHATESELLAQLAEFPAVVAAAARLREPHRVTRHLEVIAGAYHSWYAACRIVPMPTDDGTPRPVETLNRTRLWLNDATAQVLANGLGLLGVSAPEKM.

The 'HIGH' region motif lies at 134-144; the sequence is ANPTGPLHIGH.

Belongs to the class-I aminoacyl-tRNA synthetase family. Monomer.

The protein localises to the cytoplasm. It catalyses the reaction tRNA(Arg) + L-arginine + ATP = L-arginyl-tRNA(Arg) + AMP + diphosphate. This chain is Arginine--tRNA ligase, found in Micrococcus luteus (strain ATCC 4698 / DSM 20030 / JCM 1464 / CCM 169 / CCUG 5858 / IAM 1056 / NBRC 3333 / NCIMB 9278 / NCTC 2665 / VKM Ac-2230) (Micrococcus lysodeikticus).